The sequence spans 863 residues: Leucine--tRNA ligase (863 aa).

The short motif at 42–52 (PYPSGRLHMGH) is the 'HIGH' region element. The 'KMSKS' region signature appears at 622–626 (KMSKS). K625 is an ATP binding site.

It belongs to the class-I aminoacyl-tRNA synthetase family.

It localises to the cytoplasm. It catalyses the reaction tRNA(Leu) + L-leucine + ATP = L-leucyl-tRNA(Leu) + AMP + diphosphate. This is Leucine--tRNA ligase from Shewanella denitrificans (strain OS217 / ATCC BAA-1090 / DSM 15013).